The sequence spans 789 residues: Glycerol-3-phosphate acyltransferase (789 aa).

The HXXXXD motif signature appears at 275 to 280 (SHRSYI).

It belongs to the GPAT/DAPAT family.

It localises to the cell membrane. It carries out the reaction sn-glycerol 3-phosphate + an acyl-CoA = a 1-acyl-sn-glycero-3-phosphate + CoA. The protein operates within phospholipid metabolism; CDP-diacylglycerol biosynthesis; CDP-diacylglycerol from sn-glycerol 3-phosphate: step 1/3. The sequence is that of Glycerol-3-phosphate acyltransferase from Mycobacterium bovis (strain BCG / Pasteur 1173P2).